The chain runs to 177 residues: Large ribosomal subunit protein uL6 (177 aa).

The protein belongs to the universal ribosomal protein uL6 family. As to quaternary structure, part of the 50S ribosomal subunit.

This protein binds to the 23S rRNA, and is important in its secondary structure. It is located near the subunit interface in the base of the L7/L12 stalk, and near the tRNA binding site of the peptidyltransferase center. This Xanthobacter autotrophicus (strain ATCC BAA-1158 / Py2) protein is Large ribosomal subunit protein uL6.